A 303-amino-acid polypeptide reads, in one-letter code: uncharacterized protein (303 aa).

In terms of domain architecture, HTH araC/xylS-type spans 183 to 281 (KDILFYLNNN…GCSPSDYRRQ (99 aa)). DNA-binding regions (H-T-H motif) lie at residues 200 to 221 (EQLS…TKEY) and 248 to 271 (QAEI…LRHV).

This is an uncharacterized protein from Escherichia coli (strain K12).